We begin with the raw amino-acid sequence, 414 residues long: DNA primase small subunit PriS (414 aa).

Residues D98, D100, and D312 contribute to the active site.

The protein belongs to the eukaryotic-type primase small subunit family. As to quaternary structure, heterodimer of a small subunit (PriS) and a large subunit (PriL). Mg(2+) serves as cofactor. Mn(2+) is required as a cofactor.

Its function is as follows. Catalytic subunit of DNA primase, an RNA polymerase that catalyzes the synthesis of short RNA molecules used as primers for DNA polymerase during DNA replication. The small subunit contains the primase catalytic core and has DNA synthesis activity on its own. Binding to the large subunit stabilizes and modulates the activity, increasing the rate of DNA synthesis while decreasing the length of the DNA fragments, and conferring RNA synthesis capability. The DNA polymerase activity may enable DNA primase to also catalyze primer extension after primer synthesis. May also play a role in DNA repair. The chain is DNA primase small subunit PriS from Methanosarcina acetivorans (strain ATCC 35395 / DSM 2834 / JCM 12185 / C2A).